Reading from the N-terminus, the 757-residue chain is Nitrogen fixation protein FixI (757 aa).

At methionine 1–lysine 121 the chain is on the cytoplasmic side. The 71-residue stretch at arginine 37 to histidine 107 folds into the HMA domain. 2 residues coordinate a metal cation: cysteine 48 and cysteine 51. A helical membrane pass occupies residues glutamine 122–serine 143. The Extracellular portion of the chain corresponds to valine 144–tryptophan 158. A helical transmembrane segment spans residues isoleucine 159–serine 178. Residues alanine 179–histidine 185 lie on the Cytoplasmic side of the membrane. Residues glycine 186–leucine 206 traverse the membrane as a helical segment. Residues histidine 207–phenylalanine 218 are Extracellular-facing. The chain crosses the membrane as a helical span at residues aspartate 219 to arginine 239. At glycine 240–arginine 368 the chain is on the cytoplasmic side. The chain crosses the membrane as a helical span at residues alanine 369–valine 391. The Extracellular portion of the chain corresponds to glutamate 392 to alanine 398. A helical transmembrane segment spans residues methionine 399–leucine 416. Residues alanine 417–isoleucine 688 are Cytoplasmic-facing. Aspartate 454 functions as the 4-aspartylphosphate intermediate in the catalytic mechanism. Mg(2+) contacts are provided by aspartate 634 and aspartate 638. A helical transmembrane segment spans residues arginine 689 to leucine 708. The Extracellular portion of the chain corresponds to glycine 709–proline 713. A helical membrane pass occupies residues leucine 714–leucine 732. The Cytoplasmic portion of the chain corresponds to arginine 733–serine 757.

The protein belongs to the cation transport ATPase (P-type) (TC 3.A.3) family. Type IB subfamily.

Its subcellular location is the cell membrane. The catalysed reaction is ATP + H2O = ADP + phosphate + H(+). FixI is a pump of a specific cation involved in symbiotic nitrogen fixation. The four proteins FixG, FixH, FixI, and FixS may participate in a membrane-bound complex coupling the FixI cation pump with a redox process catalyzed by FixG. The polypeptide is Nitrogen fixation protein FixI (fixI) (Rhizobium meliloti (strain 1021) (Ensifer meliloti)).